We begin with the raw amino-acid sequence, 350 residues long: Histidinol-phosphate aminotransferase 1 (350 aa).

Position 211 is an N6-(pyridoxal phosphate)lysine (lysine 211).

It belongs to the class-II pyridoxal-phosphate-dependent aminotransferase family. Histidinol-phosphate aminotransferase subfamily. As to quaternary structure, homodimer. It depends on pyridoxal 5'-phosphate as a cofactor.

The catalysed reaction is L-histidinol phosphate + 2-oxoglutarate = 3-(imidazol-4-yl)-2-oxopropyl phosphate + L-glutamate. Its pathway is amino-acid biosynthesis; L-histidine biosynthesis; L-histidine from 5-phospho-alpha-D-ribose 1-diphosphate: step 7/9. This is Histidinol-phosphate aminotransferase 1 from Trichormus variabilis (strain ATCC 29413 / PCC 7937) (Anabaena variabilis).